The primary structure comprises 101 residues: Putative UPF0377 protein YBL108W (101 aa).

This sequence belongs to the UPF0377 family.

This Saccharomyces cerevisiae (strain ATCC 204508 / S288c) (Baker's yeast) protein is Putative UPF0377 protein YBL108W.